The chain runs to 335 residues: Malate dehydrogenase (335 aa).

11 to 17 provides a ligand contact to NAD(+); sequence GAAGQIG. The substrate site is built by Arg-94 and Arg-100. Residues Asn-107, Gln-114, and 131–133 contribute to the NAD(+) site; that span reads VGN. Residues Asn-133 and Arg-167 each coordinate substrate. Catalysis depends on His-192, which acts as the Proton acceptor.

This sequence belongs to the LDH/MDH superfamily. MDH type 2 family.

It catalyses the reaction (S)-malate + NAD(+) = oxaloacetate + NADH + H(+). Functionally, catalyzes the reversible oxidation of malate to oxaloacetate. This Bdellovibrio bacteriovorus (strain ATCC 15356 / DSM 50701 / NCIMB 9529 / HD100) protein is Malate dehydrogenase.